Reading from the N-terminus, the 274-residue chain is MIRQLNYWSRKAYLIYPFQVFVGALLSIVVSSETLNHQKETCALLKSSNIFNVIFAYKANQLWPFLFFSLAFLQIYFHYLARMDILPLPISSTETSSSYLTYTNHWPLLKNRIISIMITQYACKFVLKYLLLFLNFQFIDHVFIWTGGECSSGSKTTSAEKCRLENGKWDGGFDISGHFCFLVSISMILWMELHLFSRFVQAEDMFWVVNKWVRACLAIVCAVLVIWICILWVTAIYYHTILEKVLGCLMGFICPVFIYHILPKIGILHNYLYL.

Residues 1-11 (MIRQLNYWSRK) lie on the Cytoplasmic side of the membrane. A helical transmembrane segment spans residues 12 to 32 (AYLIYPFQVFVGALLSIVVSS). The Lumenal segment spans residues 33–60 (ETLNHQKETCALLKSSNIFNVIFAYKAN). The helical transmembrane segment at 61 to 81 (QLWPFLFFSLAFLQIYFHYLA) threads the bilayer. At 82–124 (RMDILPLPISSTETSSSYLTYTNHWPLLKNRIISIMITQYACK) the chain is on the cytoplasmic side. Residues 125–145 (FVLKYLLLFLNFQFIDHVFIW) traverse the membrane as a helical segment. Residues 146-170 (TGGECSSGSKTTSAEKCRLENGKWD) lie on the Lumenal side of the membrane. The helical transmembrane segment at 171 to 191 (GGFDISGHFCFLVSISMILWM) threads the bilayer. The active site involves H178. Residues 192 to 215 (ELHLFSRFVQAEDMFWVVNKWVRA) lie on the Cytoplasmic side of the membrane. The chain crosses the membrane as a helical span at residues 216–236 (CLAIVCAVLVIWICILWVTAI). The Lumenal segment spans residues 237 to 247 (YYHTILEKVLG). H239 is an active-site residue. A helical transmembrane segment spans residues 248-268 (CLMGFICPVFIYHILPKIGIL). At 269-274 (HNYLYL) the chain is on the cytoplasmic side.

This sequence belongs to the FIT family. Yeast FIT2A/YFT2 subfamily.

It is found in the endoplasmic reticulum membrane. Its subcellular location is the vacuole. The catalysed reaction is an acyl-CoA + H2O = an acyl-4'-phosphopantetheine + adenosine 3',5'-bisphosphate + 2 H(+). It carries out the reaction (9Z)-octadecenoyl-CoA + H2O = S-(9Z-octadecenoyl)-4'-phosphopantetheine + adenosine 3',5'-bisphosphate + 2 H(+). The enzyme catalyses (5Z,8Z,11Z,14Z)-eicosatetraenoyl-CoA + H2O = S-(5Z,8Z,11Z,14Z-eicosatetraenoyl)-4'-phosphopantetheine + adenosine 3',5'-bisphosphate + 2 H(+). It catalyses the reaction hexadecanoyl-CoA + H2O = S-hexadecanoyl-4'-phosphopantetheine + adenosine 3',5'-bisphosphate + 2 H(+). Functionally, fatty acyl-coenzyme A (CoA) diphosphatase that hydrolyzes fatty acyl-CoA to yield acyl-4'-phosphopantetheine and adenosine 3',5'-bisphosphate. Preferentially hydrolyzes unsaturated long-chain acyl-CoA substrates in the endoplasmic reticulum (ER) lumen. This catalytic activity is required for maintaining ER structure and for lipid droplets (LDs) biogenesis, which are lipid storage organelles involved in maintaining lipid and energy homeostasis. May directly bind to diacylglycerol (DAGs) and triacylglycerol, which is also important for LD biogenesis. May support directional budding of nacent LDs from the ER into the cytosol by reducing DAG levels at sites of LD formation. May play a role in the regulation of cell morphology and cytoskeletal organization. Involved in phospholipid biosynthesis. The sequence is that of Acyl-coenzyme A diphosphatase YFT2 from Saccharomyces cerevisiae (strain ATCC 204508 / S288c) (Baker's yeast).